The sequence spans 205 residues: Large ribosomal subunit protein uL18 (205 aa).

It belongs to the universal ribosomal protein uL18 family. As to quaternary structure, part of the 50S ribosomal subunit. Contacts the 5S and 23S rRNAs.

In terms of biological role, this is one of the proteins that bind and probably mediate the attachment of the 5S RNA into the large ribosomal subunit, where it forms part of the central protuberance. The protein is Large ribosomal subunit protein uL18 of Pyrobaculum neutrophilum (strain DSM 2338 / JCM 9278 / NBRC 100436 / V24Sta) (Thermoproteus neutrophilus).